A 1439-amino-acid chain; its full sequence is Receptor-type tyrosine-protein phosphatase kappa (1439 aa).

The first 26 residues, 1–26, serve as a signal peptide directing secretion; sequence MDTTAAAALPAFVALLLLSPWPLLGS. Residues 27–752 lie on the Extracellular side of the membrane; sequence AQGQFSAGGC…PAKQTDRVVK (726 aa). The 164-residue stretch at 31 to 194 folds into the MAM domain; it reads FSAGGCTFDD…IQVLSYPCDK (164 aa). N-linked (GlcNAc...) asparagine glycans are attached at residues N101, N140, and N211. Residues 196–281 form the Ig-like C2-type domain; that stretch reads PHFLRLGDVE…TQSERGSGVS (86 aa). Residues C216 and C270 are joined by a disulfide bond. Fibronectin type-III domains lie at 294–389, 392–488, 491–595, and 597–680; these read PIAP…CAEP, TPKT…TDED, GPVP…SAPT, and PDYE…GNLP. N-linked (GlcNAc...) asparagine glycosylation is found at N416, N424, N436, N462, N552, N586, N590, N607, and N690. A helical membrane pass occupies residues 753-774; the sequence is IAGISAGILVFILLLLVVILIV. Residues 775-1439 are Cytoplasmic-facing; it reads KKSKLAKKRK…DVALEYLESS (665 aa). Position 856 is a phosphoserine (S856). Tyrosine-protein phosphatase domains lie at 887 to 1141 and 1173 to 1435; these read FKEE…ILEA and LKDE…ALEY. Substrate contacts are provided by residues D1050, 1082–1088, and Q1126; that span reads CSAGAGR. Catalysis depends on C1082, which acts as the Phosphocysteine intermediate. Residue C1376 is the Phosphocysteine intermediate of the active site.

Belongs to the protein-tyrosine phosphatase family. Receptor class 2B subfamily. Post-translationally, this protein undergoes proteolytic processing. In terms of tissue distribution, high levels in lung, brain and colon; less in liver, pancreas, stomach, kidney, placenta and mammary carcinoma.

It localises to the cell junction. Its subcellular location is the adherens junction. The protein localises to the cell membrane. The catalysed reaction is O-phospho-L-tyrosyl-[protein] + H2O = L-tyrosyl-[protein] + phosphate. In terms of biological role, regulation of processes involving cell contact and adhesion such as growth control, tumor invasion, and metastasis. Negative regulator of EGFR signaling pathway. Forms complexes with beta-catenin and gamma-catenin/plakoglobin. Beta-catenin may be a substrate for the catalytic activity of PTPRK/PTP-kappa. The polypeptide is Receptor-type tyrosine-protein phosphatase kappa (PTPRK) (Homo sapiens (Human)).